Reading from the N-terminus, the 198-residue chain is GTP-binding protein RHO1 (198 aa).

16 to 23 serves as a coordination point for GTP; it reads GDGACGKT. The Effector region signature appears at 38–46; it reads YVPTVFENY. GTP is bound by residues 63–67 and 121–124; these read DTAGQ and CKSD. Cys-195 carries the cysteine methyl ester modification. Residue Cys-195 is the site of S-geranylgeranyl cysteine attachment. The propeptide at 196–198 is removed in mature form; sequence VVL.

This sequence belongs to the small GTPase superfamily. Rho family.

The protein resides in the cell membrane. The protein is GTP-binding protein RHO1 (RHO1) of Candida albicans (strain SC5314 / ATCC MYA-2876) (Yeast).